We begin with the raw amino-acid sequence, 270 residues long: MTVLRRKLAEAKAEGRAALVGYYPAGFPDVASSIRVVQAMVAGGCDVIEVGFPYSDPTMDGPVIQQAADRALAAGTTPKDVLAVVRAVADAGAAALVMSYWNPIEKYGVDAFAADLAAAGGSGLITPDLIPEEAEPWIKASDAAGIDRIFLVAPSSTDERLAKTCAASRGFVYAASLMGVTGTRDKVAATARRLVERTRAVTRDSGLPICVGLGISNGAQAAEVASYADGVIVGTGFCQRVLDAPDVDTACQQVRDFAAELAAGVRAAAR.

Residues Glu-49 and Asp-60 each act as proton acceptor in the active site.

This sequence belongs to the TrpA family. As to quaternary structure, tetramer of two alpha and two beta chains.

It carries out the reaction (1S,2R)-1-C-(indol-3-yl)glycerol 3-phosphate + L-serine = D-glyceraldehyde 3-phosphate + L-tryptophan + H2O. It functions in the pathway amino-acid biosynthesis; L-tryptophan biosynthesis; L-tryptophan from chorismate: step 5/5. The alpha subunit is responsible for the aldol cleavage of indoleglycerol phosphate to indole and glyceraldehyde 3-phosphate. This is Tryptophan synthase alpha chain from Thermobifida fusca (strain YX).